The primary structure comprises 336 residues: Ankyrin repeat and SOCS box protein 1 (336 aa).

6 ANK repeats span residues 37-69 (CDDTRLHDAAYVGDLQTLRNLLQEESYRSRINE), 78-107 (LPCTPLRIAATAGHGNCVDFLIRKGAEVDL), 111-140 (KGQTALYVAVVNGHLESTEILLEAGADPNG), 144-173 (HRSTPVYHASRVGRDDILKALIRYGADVDV), 192-221 (LVVCPLYISAAYHNLQCFRLLLQAGANPDF), and 236-266 (SPGCVMDAVLRHGCEAAFVSLLVEFGANLNL). Residues 287-336 (LQVFKEARSIPRTLLSLCRVAVRRALGKYRLHLVPSLPLPDPIKKFLLYE) form the SOCS box domain.

The protein belongs to the ankyrin SOCS box (ASB) family. Interacts with CUL5 and RNF7. Highest expression in testis, spleen, bone marrow and salivary gland.

It participates in protein modification; protein ubiquitination. In terms of biological role, probable substrate-recognition component of a SCF-like ECS (Elongin-Cullin-SOCS-box protein) E3 ligase complex which mediates the ubiquitination and subsequent proteasomal degradation of target proteins. Mediates Notch-induced ubiquitination and degradation of TCF3/E2A and JAK2. May play a role in testis development. This chain is Ankyrin repeat and SOCS box protein 1 (Asb1), found in Mus musculus (Mouse).